Reading from the N-terminus, the 559-residue chain is Excitatory amino acid transporter 5 (559 aa).

The Cytoplasmic segment spans residues 1–16 (MVLDAVLARGRTVCKH). Transmembrane regions (helical) follow at residues 17 to 37 (NGLL…GFFL), 60 to 80 (MLKM…LASL), and 94 to 114 (AYYL…VSII). At 115–215 (HPGGAAQKET…EIVYKSEPGT (101 aa)) the chain is on the extracellular side. Asn190 carries an N-linked (GlcNAc...) asparagine glycan. Residues 216–236 (SDGMNVLGIVIFSATMGIMLG) traverse the membrane as a helical segment. Asn253 carries N-linked (GlcNAc...) asparagine glycosylation. Helical transmembrane passes span 259–279 (IVAV…AGKI), 298–318 (TVVC…YFLI), 329–349 (GVLQ…TLPI), 371–391 (VGAT…AIFI), 413–433 (AASI…VIVL), and 456–476 (FRTM…AHIC).

This sequence belongs to the dicarboxylate/amino acid:cation symporter (DAACS) (TC 2.A.23) family. SLC1A7 subfamily. Interacts with the PDZ domains of DLG4. As to expression, expressed in retina, located in both cone and rod photoreceptor terminals and in axon terminals of rod bipolar cells.

Its subcellular location is the photoreceptor inner segment membrane. The protein resides in the synaptic cell membrane. The enzyme catalyses K(+)(in) + L-glutamate(out) + 3 Na(+)(out) + H(+)(out) = K(+)(out) + L-glutamate(in) + 3 Na(+)(in) + H(+)(in). It catalyses the reaction K(+)(in) + L-aspartate(out) + 3 Na(+)(out) + H(+)(out) = K(+)(out) + L-aspartate(in) + 3 Na(+)(in) + H(+)(in). The catalysed reaction is D-aspartate(out) + K(+)(in) + 3 Na(+)(out) + H(+)(out) = D-aspartate(in) + K(+)(out) + 3 Na(+)(in) + H(+)(in). In terms of biological role, sodium-dependent, high-affinity amino acid transporter that mediates the uptake of L-glutamate and also L-aspartate and D-aspartate. Functions as a symporter that transports one amino acid molecule together with two or three Na(+) ions and one proton, in parallel with the counter-transport of one K(+) ion. Acts primarily as an inhibitory glutamate-gated chloride channel being a major inhibitory presynaptic receptor at mammalian rod bipolar cell axon terminals. Glutamate binding gates a large Cl(-) conductance that mediates inhibition, affecting visual processing in the retina. The polypeptide is Excitatory amino acid transporter 5 (Mus musculus (Mouse)).